The sequence spans 162 residues: EF-hand calcium-binding domain-containing protein 11 (162 aa).

EF-hand domains are found at residues 18 to 53 (SERR…LFGY), 91 to 126 (LYRN…VAPK), and 127 to 162 (LPAR…GQSK). Ca(2+)-binding residues include D140, D142, D144, H146, and D151.

The protein is EF-hand calcium-binding domain-containing protein 11 (Efcab11) of Mus musculus (Mouse).